The primary structure comprises 128 residues: V-type proton ATPase subunit F (128 aa).

Belongs to the V-ATPase F subunit family. V-ATPase is a heteromultimeric enzyme composed of a peripheral catalytic V1 complex (components A to H) attached to an integral membrane V0 proton pore complex (components: a, c, c'', d and e).

It is found in the vacuole membrane. In terms of biological role, subunit of the peripheral V1 complex of vacuolar ATPase essential for assembly or catalytic function. V-ATPase is responsible for acidifying a variety of intracellular compartments in eukaryotic cells. This Arabidopsis thaliana (Mouse-ear cress) protein is V-type proton ATPase subunit F (VHA-F).